Reading from the N-terminus, the 824-residue chain is C-Jun-amino-terminal kinase-interacting protein 2 (824 aa).

Disordered stretches follow at residues 1 to 28 (MADRAEMFSLSTFHSLSPPGCRPPQDIS), 40 to 160 (ITDD…GFDL), 172 to 349 (CSPA…DSPW), and 361 to 501 (EGSS…APRD). A compositionally biased stretch (acidic residues) spans 77–110 (DFQEFEMIDDNEEEDDEDEEEEEEEEEGDGEGQE). The segment at 110–275 (EGGDPGSEAP…RMISSISETE (166 aa)) is JNK-binding domain (JBD). Polar residues predominate over residues 141 to 156 (LRLTTLGAQDSLNNNG). The necessary for interaction with FGF13 stretch occupies residues 239–498 (GRGGRRSSQE…PGGRGTGPSA (260 aa)). Residues serine 254, serine 302, and serine 305 each carry the phosphoserine modification. A compositionally biased stretch (low complexity) spans 268 to 305 (ISSISETELELSSDGGSSSSGRSSHLTNSIEEASSPAS). A compositionally biased stretch (acidic residues) spans 327-346 (TNSEYESGSESEPDLSEDAD). Positions 416–432 (APPPPAPAAPRPGPAQP) are enriched in pro residues. The span at 451 to 467 (AAPGRAARPGRACSAAC) shows a compositional bias: low complexity. Positions 468-484 (SEEEDEEDDEEEEDAED) are enriched in acidic residues. The SH3 domain occupies 604–665 (EREQTHRAVF…PAFYAHAVPG (62 aa)). The PID domain maps to 677–813 (PCWVERFDVQ…FLEYYQEHLA (137 aa)).

This sequence belongs to the JIP scaffold family. As to quaternary structure, forms homo- or heterooligomeric complexes. Binds specific components of the JNK signaling pathway namely JNK1, JNK2, JNK3, MAP2K7, MAP3K10, MAP3K11, MAP3K12 and MAPK13. Also binds the proline-rich domain-containing splice variant of apolipoprotein E receptor 2 (ApoER2). Binds the cytoplasmic tails of LRP1 and LRP2 (Megalin). Binds the TPR motif-containing C-terminal of kinesin light chain, Klc1, pre-assembled MAPK8IP1 scaffolding complexes are then transported as a cargo of kinesin, to the required subcellular location. Interacts with the cytoplasmic domain of APP. Interacts with DCLK2. Interacts with TIAM1 and TIAM2. Interacts with FGF13; enables the interaction with MAPK13 and may regulate the MAPK8IP2 scaffolding activity. Interacts with SH3RF2. As to expression, expressed mainly in the brain and pancreas, including insulin-secreting cells. In the nervous system, more abundantly expressed in the cerebellum, pituitary gland, occipital lobe and the amygdala. Also expressed in fetal brain. Very low levels found in uterus, ovary, prostate, colon, testis, adrenal gland, thyroid gland and salivary gland.

It localises to the cytoplasm. In terms of biological role, the JNK-interacting protein (JIP) group of scaffold proteins selectively mediates JNK signaling by aggregating specific components of the MAPK cascade to form a functional JNK signaling module. JIP2 inhibits IL1 beta-induced apoptosis in insulin-secreting cells. May function as a regulator of vesicle transport, through interactions with the JNK-signaling components and motor proteins. This chain is C-Jun-amino-terminal kinase-interacting protein 2 (MAPK8IP2), found in Homo sapiens (Human).